A 153-amino-acid chain; its full sequence is UPF0260 protein CKO_01185 (153 aa).

This sequence belongs to the UPF0260 family.

The sequence is that of UPF0260 protein CKO_01185 from Citrobacter koseri (strain ATCC BAA-895 / CDC 4225-83 / SGSC4696).